The primary structure comprises 531 residues: NADH-quinone oxidoreductase subunit N (531 aa).

13 helical membrane-spanning segments follow: residues 13 to 33 (LAPI…EAFA), 45 to 65 (LALL…AEVI), 85 to 105 (PALA…LVIA), 150 to 170 (LFSV…TLFI), 200 to 220 (YFLL…LLYG), 242 to 262 (GLLV…VGAV), 289 to 309 (VAAF…MTWD), 310 to 330 (IQPF…VLAI), 339 to 359 (LAYS…AMSP), 365 to 385 (VFFY…LVAL), 415 to 435 (VATV…TSGF), 460 to 480 (ASAA…FTSP), and 496 to 516 (GFTA…GVWP).

This sequence belongs to the complex I subunit 2 family. NDH-1 is composed of 14 different subunits. Subunits NuoA, H, J, K, L, M, N constitute the membrane sector of the complex.

It localises to the cell membrane. The enzyme catalyses a quinone + NADH + 5 H(+)(in) = a quinol + NAD(+) + 4 H(+)(out). Functionally, NDH-1 shuttles electrons from NADH, via FMN and iron-sulfur (Fe-S) centers, to quinones in the respiratory chain. The immediate electron acceptor for the enzyme in this species is believed to be a menaquinone. Couples the redox reaction to proton translocation (for every two electrons transferred, four hydrogen ions are translocated across the cytoplasmic membrane), and thus conserves the redox energy in a proton gradient. The sequence is that of NADH-quinone oxidoreductase subunit N from Beutenbergia cavernae (strain ATCC BAA-8 / DSM 12333 / CCUG 43141 / JCM 11478 / NBRC 16432 / NCIMB 13614 / HKI 0122).